The following is a 368-amino-acid chain: Ribosomal RNA large subunit methyltransferase M (368 aa).

S-adenosyl-L-methionine-binding positions include serine 189, 222-225 (CPGG), aspartate 241, aspartate 261, and aspartate 278. The active-site Proton acceptor is lysine 307.

The protein belongs to the class I-like SAM-binding methyltransferase superfamily. RNA methyltransferase RlmE family. RlmM subfamily. As to quaternary structure, monomer.

It is found in the cytoplasm. The catalysed reaction is cytidine(2498) in 23S rRNA + S-adenosyl-L-methionine = 2'-O-methylcytidine(2498) in 23S rRNA + S-adenosyl-L-homocysteine + H(+). Functionally, catalyzes the 2'-O-methylation at nucleotide C2498 in 23S rRNA. This chain is Ribosomal RNA large subunit methyltransferase M, found in Yersinia enterocolitica serotype O:8 / biotype 1B (strain NCTC 13174 / 8081).